The chain runs to 275 residues: Ribosomal RNA small subunit methyltransferase A (275 aa).

S-adenosyl-L-methionine is bound by residues asparagine 19, leucine 21, glycine 46, glutamate 71, aspartate 94, and asparagine 117.

It belongs to the class I-like SAM-binding methyltransferase superfamily. rRNA adenine N(6)-methyltransferase family. RsmA subfamily.

Its subcellular location is the cytoplasm. It carries out the reaction adenosine(1518)/adenosine(1519) in 16S rRNA + 4 S-adenosyl-L-methionine = N(6)-dimethyladenosine(1518)/N(6)-dimethyladenosine(1519) in 16S rRNA + 4 S-adenosyl-L-homocysteine + 4 H(+). In terms of biological role, specifically dimethylates two adjacent adenosines (A1518 and A1519) in the loop of a conserved hairpin near the 3'-end of 16S rRNA in the 30S particle. May play a critical role in biogenesis of 30S subunits. The protein is Ribosomal RNA small subunit methyltransferase A of Burkholderia multivorans (strain ATCC 17616 / 249).